A 546-amino-acid chain; its full sequence is Chaperonin GroEL (546 aa).

Residues 30–33, lysine 51, 87–91, glycine 415, and aspartate 496 each bind ATP; these read TLGP and DGTTT. Residues 526-546 are disordered; that stretch reads PEPKSAPAGGMGGMGGMDGMM. Residues 534–546 are compositionally biased toward gly residues; sequence GGMGGMGGMDGMM.

Belongs to the chaperonin (HSP60) family. In terms of assembly, forms a cylinder of 14 subunits composed of two heptameric rings stacked back-to-back. Interacts with the co-chaperonin GroES.

It localises to the cytoplasm. It catalyses the reaction ATP + H2O + a folded polypeptide = ADP + phosphate + an unfolded polypeptide.. In terms of biological role, together with its co-chaperonin GroES, plays an essential role in assisting protein folding. The GroEL-GroES system forms a nano-cage that allows encapsulation of the non-native substrate proteins and provides a physical environment optimized to promote and accelerate protein folding. This chain is Chaperonin GroEL, found in Rhodopseudomonas palustris.